The chain runs to 338 residues: 1-aminocyclopropane-1-carboxylate deaminase (338 aa).

Position 51 is an N6-(pyridoxal phosphate)lysine (lysine 51). The active-site Nucleophile is serine 78.

It belongs to the ACC deaminase/D-cysteine desulfhydrase family. In terms of assembly, homotrimer. Requires pyridoxal 5'-phosphate as cofactor.

It carries out the reaction 1-aminocyclopropane-1-carboxylate + H2O = 2-oxobutanoate + NH4(+). Functionally, catalyzes a cyclopropane ring-opening reaction, the irreversible conversion of 1-aminocyclopropane-1-carboxylate (ACC) to ammonia and alpha-ketobutyrate. Allows growth on ACC as a nitrogen source. This Burkholderia lata (strain ATCC 17760 / DSM 23089 / LMG 22485 / NCIMB 9086 / R18194 / 383) protein is 1-aminocyclopropane-1-carboxylate deaminase.